The primary structure comprises 347 residues: MDYKTSGVDIEAGREFVSEIKQAVEGTHTSNVIEGIGGFGGLFRIPIDSFKKPVLVSGTDGVGTKLELAQSKNFHFEVGIDLVAMCMNDIITSGAKPLFFLDYIATGKLDKNQLLRVVKGISHGCGENNCSLLGGETAEMPGFYSKNKYDLAGFCVGIVDEDKLINGKKVSENDLIIALKSNGVHSNGFSLVRKIIQNNNQIDKEFEKVFHLNFYDELLKPTKIYNNVINQMLTENIEIKAMSHITGGGIPENLPRCMPSDFIPYVDTGSWEIPIIFKFLKEKGSIPEKDFWNTFNLGVGFCLIIDKQFKDPILNICKDNEIDSWEIGKIVRKNDSTISKFLPEILT.

Belongs to the AIR synthase family.

The protein localises to the cytoplasm. It carries out the reaction 2-formamido-N(1)-(5-O-phospho-beta-D-ribosyl)acetamidine + ATP = 5-amino-1-(5-phospho-beta-D-ribosyl)imidazole + ADP + phosphate + H(+). It participates in purine metabolism; IMP biosynthesis via de novo pathway; 5-amino-1-(5-phospho-D-ribosyl)imidazole from N(2)-formyl-N(1)-(5-phospho-D-ribosyl)glycinamide: step 2/2. The protein is Phosphoribosylformylglycinamidine cyclo-ligase of Prochlorococcus marinus (strain AS9601).